Reading from the N-terminus, the 152-residue chain is SKP1-like protein 12 (152 aa).

The interaction with the F-box domain of F-box proteins stretch occupies residues 94-152 (ILAANYLNIKSLFDLTCQTVADMIKGKTPEEIRSTFNIENDFTPEEEEAVRKENQWAFE).

The protein belongs to the SKP1 family. In terms of assembly, part of a SCF (SKP1-cullin-F-box) protein ligase complex. Interacts with ADO3/FKF1, COI1/FBL2, EBF1/FBL6, PP2B10, At3g61590 and At5g49610. Expressed in young seedlings, roots, leaves, floral stems, inflorescences, and siliques, with a slightly higher level in inflorescence than in other tissues.

Its subcellular location is the nucleus. Its pathway is protein modification; protein ubiquitination. Involved in ubiquitination and subsequent proteasomal degradation of target proteins. Together with CUL1, RBX1 and a F-box protein, it forms a SCF E3 ubiquitin ligase complex. The functional specificity of this complex depends on the type of F-box protein. In the SCF complex, it serves as an adapter that links the F-box protein to CUL1. Plays a role during early flowers reproductive development. In Arabidopsis thaliana (Mouse-ear cress), this protein is SKP1-like protein 12 (ASK12).